A 397-amino-acid polypeptide reads, in one-letter code: Acylalkylpyrone synthase csyB (397 aa).

CoA contacts are provided by residues Lys-50 and 50–57 (KMLEINRK). Catalysis depends on Cys-155, which acts as the Nucleophile. 214–215 (GD) contacts substrate. Residues Ile-267, Gly-312, 312 to 315 (GGYA), Tyr-314, and Ala-315 contribute to the CoA site. The active site involves His-377.

This sequence belongs to the thiolase-like superfamily. Chalcone/stilbene synthases family. Homodimer.

Acylalkylpyrone synthase that catalyzes not only the polyketide chain elongation but also the one-pot condensation of two beta-ketoacyl units to produce the 3-acyl-4-hydroxy-6-alkyl-alpha-pyrone (AcAP) scaffold, a precursor of csypyrone B. The enzyme reaction is initiated by the loading of acetoacetyl-CoA onto Cys-155, and subsequent thioester bond cleavage by the nucleophilic water generates the beta-keto acid intermediate, which is placed within a pocket. The second beta-ketoacyl unit is then produced by polyketide chain elongation of fatty acyl-CoA with one molecule of malonyl-CoA, and the condensation with the beta-ketoacid generates the final products. Csypyrone B1 is the major product and contains a propanoic acid side-chain, whereas csypyrones B2 and B3 are minor compounds that contain butyric or pentanoic acid side-chains, respectively. This chain is Acylalkylpyrone synthase csyB, found in Aspergillus oryzae (strain ATCC 42149 / RIB 40) (Yellow koji mold).